The primary structure comprises 373 residues: DNA replication and repair protein RecF (373 aa).

Residue 30–37 participates in ATP binding; it reads GANGSGKT.

The protein belongs to the RecF family.

Its subcellular location is the cytoplasm. In terms of biological role, the RecF protein is involved in DNA metabolism; it is required for DNA replication and normal SOS inducibility. RecF binds preferentially to single-stranded, linear DNA. It also seems to bind ATP. The chain is DNA replication and repair protein RecF from Marinobacter nauticus (strain ATCC 700491 / DSM 11845 / VT8) (Marinobacter aquaeolei).